Here is a 420-residue protein sequence, read N- to C-terminus: Serine--tRNA ligase (420 aa).

229-231 provides a ligand contact to L-serine; sequence TAE. 260 to 262 contacts ATP; the sequence is RAE. Glu283 provides a ligand contact to L-serine. 347–350 is an ATP binding site; that stretch reads EISS. Ser382 is a binding site for L-serine.

Belongs to the class-II aminoacyl-tRNA synthetase family. Type-1 seryl-tRNA synthetase subfamily. In terms of assembly, homodimer. The tRNA molecule binds across the dimer.

It localises to the cytoplasm. It catalyses the reaction tRNA(Ser) + L-serine + ATP = L-seryl-tRNA(Ser) + AMP + diphosphate + H(+). The enzyme catalyses tRNA(Sec) + L-serine + ATP = L-seryl-tRNA(Sec) + AMP + diphosphate + H(+). Its pathway is aminoacyl-tRNA biosynthesis; selenocysteinyl-tRNA(Sec) biosynthesis; L-seryl-tRNA(Sec) from L-serine and tRNA(Sec): step 1/1. Catalyzes the attachment of serine to tRNA(Ser). Is also able to aminoacylate tRNA(Sec) with serine, to form the misacylated tRNA L-seryl-tRNA(Sec), which will be further converted into selenocysteinyl-tRNA(Sec). The sequence is that of Serine--tRNA ligase from Caldicellulosiruptor saccharolyticus (strain ATCC 43494 / DSM 8903 / Tp8T 6331).